The following is a 96-amino-acid chain: Auxin-responsive protein SAUR29 (96 aa).

It belongs to the ARG7 family.

The protein localises to the cell membrane. In terms of biological role, functions as a positive effector of cell expansion through modulation of auxin transport. Involved in thermo-responsiveness of plant architecture. Enhances plasma membrane H(+)-ATPase. This chain is Auxin-responsive protein SAUR29, found in Arabidopsis thaliana (Mouse-ear cress).